Reading from the N-terminus, the 202-residue chain is MNAQVLNLVAALGVMQYSKKLDFTDPQIVYYARAAYVISNTIIFGVYAIIQARINANNDETPLVYEEPAPPFSGQSNGKLVTTTVKEYDSEQLQKAKRSTMMGVAIMAFMHLYMGYAQPLVIQSILPLISLFTNNLVSIYIFNKAAEGSLSRPFAPPAGLFGGGNKPAAAVTGTSSNSNNASAKSDGPTITELNENETEKSS.

The next 3 membrane-spanning stretches (helical) occupy residues 34–54, 102–122, and 125–145; these read AAYV…QARI, MGVA…PLVI, and ILPL…FNKA. Positions 165-202 are disordered; that stretch reads NKPAAAVTGTSSNSNNASAKSDGPTITELNENETEKSS. Over residues 168-185 the composition is skewed to low complexity; the sequence is AAAVTGTSSNSNNASAKS. Phosphoserine is present on residues S185 and S201.

It belongs to the PHO88 family.

The protein localises to the endoplasmic reticulum membrane. This is an uncharacterized protein from Schizosaccharomyces pombe (strain 972 / ATCC 24843) (Fission yeast).